A 103-amino-acid chain; its full sequence is N(4)-acetylcytidine amidohydrolase (103 aa).

Positions I6–Q94 constitute an ASCH domain. The active-site Proton acceptor is the K21. Residue T24 is the Nucleophile of the active site. The active-site Proton donor is E74.

The protein belongs to the N(4)-acetylcytidine amidohydrolase family.

It catalyses the reaction N(4)-acetylcytidine + H2O = cytidine + acetate + H(+). The catalysed reaction is N(4)-acetyl-2'-deoxycytidine + H2O = 2'-deoxycytidine + acetate + H(+). The enzyme catalyses N(4)-acetylcytosine + H2O = cytosine + acetate + H(+). In terms of biological role, catalyzes the hydrolysis of N(4)-acetylcytidine (ac4C). In Citrobacter koseri (strain ATCC BAA-895 / CDC 4225-83 / SGSC4696), this protein is N(4)-acetylcytidine amidohydrolase.